Here is a 156-residue protein sequence, read N- to C-terminus: 6,7-dimethyl-8-ribityllumazine synthase (156 aa).

5-amino-6-(D-ribitylamino)uracil contacts are provided by residues Phe-22, 57–59, and 81–83; these read AVE and SVI. 86–87 is a (2S)-2-hydroxy-3-oxobutyl phosphate binding site; sequence GT. The active-site Proton donor is the His-89. Residue Phe-114 participates in 5-amino-6-(D-ribitylamino)uracil binding. Residue Arg-128 coordinates (2S)-2-hydroxy-3-oxobutyl phosphate.

The protein belongs to the DMRL synthase family. Forms an icosahedral capsid composed of 60 subunits, arranged as a dodecamer of pentamers.

The catalysed reaction is (2S)-2-hydroxy-3-oxobutyl phosphate + 5-amino-6-(D-ribitylamino)uracil = 6,7-dimethyl-8-(1-D-ribityl)lumazine + phosphate + 2 H2O + H(+). It functions in the pathway cofactor biosynthesis; riboflavin biosynthesis; riboflavin from 2-hydroxy-3-oxobutyl phosphate and 5-amino-6-(D-ribitylamino)uracil: step 1/2. Its function is as follows. Catalyzes the formation of 6,7-dimethyl-8-ribityllumazine by condensation of 5-amino-6-(D-ribitylamino)uracil with 3,4-dihydroxy-2-butanone 4-phosphate. This is the penultimate step in the biosynthesis of riboflavin. This is 6,7-dimethyl-8-ribityllumazine synthase from Aliivibrio salmonicida (strain LFI1238) (Vibrio salmonicida (strain LFI1238)).